The following is a 406-amino-acid chain: Enoyl-[acyl-carrier-protein] reductase [NADH] (406 aa).

NAD(+) contacts are provided by residues 48 to 53 (GASTGF), 74 to 75 (FE), 111 to 112 (DA), and 140 to 141 (IA). Substrate is bound at residue Y226. Y236 functions as the Proton donor in the catalytic mechanism. NAD(+) is bound by residues K245 and 275-277 (LVT).

This sequence belongs to the TER reductase family. In terms of assembly, monomer.

It catalyses the reaction a 2,3-saturated acyl-[ACP] + NAD(+) = a (2E)-enoyl-[ACP] + NADH + H(+). It participates in lipid metabolism; fatty acid biosynthesis. Its function is as follows. Involved in the final reduction of the elongation cycle of fatty acid synthesis (FAS II). Catalyzes the reduction of a carbon-carbon double bond in an enoyl moiety that is covalently linked to an acyl carrier protein (ACP). This Coxiella burnetii (strain RSA 331 / Henzerling II) protein is Enoyl-[acyl-carrier-protein] reductase [NADH].